A 500-amino-acid chain; its full sequence is L-arabinose isomerase (500 aa).

Residues Glu-306, Glu-333, His-350, and His-450 each coordinate Mn(2+).

This sequence belongs to the arabinose isomerase family. As to quaternary structure, homohexamer. Requires Mn(2+) as cofactor.

The catalysed reaction is beta-L-arabinopyranose = L-ribulose. Its pathway is carbohydrate degradation; L-arabinose degradation via L-ribulose; D-xylulose 5-phosphate from L-arabinose (bacterial route): step 1/3. Catalyzes the conversion of L-arabinose to L-ribulose. This Salmonella paratyphi A (strain ATCC 9150 / SARB42) protein is L-arabinose isomerase.